The sequence spans 440 residues: Transposon Ty1-PR3 Gag polyprotein (440 aa).

Polar residues-rich tracts occupy residues 1–23, 48–60, and 127–152; these read MESQQLSNYSPISHGSACASVTS, TKANSQQTTTPAS, and QSQFPQYPSSVGTPLSTPSPESGNTF. Disordered regions lie at residues 1–93, 126–173, and 352–440; these read MESQ…MMTQ, PQSQ…RPPP, and GSRN…PGTY. The span at 153–165 shows a compositional bias: low complexity; the sequence is TDSSSADSDMTST. The segment at 299–401 is RNA-binding; it reads NNGIHINNKV…NSKSKTARAH (103 aa). Low complexity predominate over residues 402-418; sequence NVSTSNNSPSTDNDSIS. At S416 the chain carries Phosphoserine. Residues 419-428 are compositionally biased toward polar residues; sequence KSTTEPIQLN. Over residues 429-440 the composition is skewed to basic and acidic residues; it reads NKHDLHLRPGTY.

As to quaternary structure, homotrimer.

The protein localises to the cytoplasm. In terms of biological role, capsid protein (CA) is the structural component of the virus-like particle (VLP), forming the shell that encapsulates the retrotransposons dimeric RNA genome. The particles are assembled from trimer-clustered units and there are holes in the capsid shells that allow for the diffusion of macromolecules. CA also has nucleocapsid-like chaperone activity, promoting primer tRNA(i)-Met annealing to the multipartite primer-binding site (PBS), dimerization of Ty1 RNA and initiation of reverse transcription. The polypeptide is Transposon Ty1-PR3 Gag polyprotein (TY1A-PR3) (Saccharomyces cerevisiae (strain ATCC 204508 / S288c) (Baker's yeast)).